Reading from the N-terminus, the 1276-residue chain is Probable ubiquitin carboxyl-terminal hydrolase K02C4.3 (1276 aa).

The region spanning 168–762 (TGLYNSGNTC…SAYMLMYVRS (595 aa)) is the USP domain. Cys177 serves as the catalytic Nucleophile. The tract at residues 375 to 402 (SMDTEAATSSNLPGNSVENHPNPAAPEV) is disordered. Positions 380–393 (AATSSNLPGNSVEN) are enriched in polar residues. His707 acts as the Proton acceptor in catalysis.

Belongs to the peptidase C19 family.

It catalyses the reaction Thiol-dependent hydrolysis of ester, thioester, amide, peptide and isopeptide bonds formed by the C-terminal Gly of ubiquitin (a 76-residue protein attached to proteins as an intracellular targeting signal).. This is Probable ubiquitin carboxyl-terminal hydrolase K02C4.3 from Caenorhabditis elegans.